A 134-amino-acid chain; its full sequence is Methylglyoxal synthase (134 aa).

The region spanning 1-134 (MKIALIAHDR…DWRLIQERRN (134 aa)) is the MGS-like domain. Substrate contacts are provided by residues His-8, Lys-12, 34–37 (TGTT), and 54–55 (SG). Asp-60 acts as the Proton donor/acceptor in catalysis. His-87 serves as a coordination point for substrate.

The protein belongs to the methylglyoxal synthase family.

The enzyme catalyses dihydroxyacetone phosphate = methylglyoxal + phosphate. Its function is as follows. Catalyzes the formation of methylglyoxal from dihydroxyacetone phosphate. The sequence is that of Methylglyoxal synthase from Lysinibacillus sphaericus (strain C3-41).